A 101-amino-acid chain; its full sequence is UPF0473 protein SUB1774 (101 aa).

The protein belongs to the UPF0473 family.

In Streptococcus uberis (strain ATCC BAA-854 / 0140J), this protein is UPF0473 protein SUB1774.